Here is a 371-residue protein sequence, read N- to C-terminus: S-adenosylmethionine:tRNA ribosyltransferase-isomerase (371 aa).

It belongs to the QueA family. Monomer.

The protein resides in the cytoplasm. It carries out the reaction 7-aminomethyl-7-carbaguanosine(34) in tRNA + S-adenosyl-L-methionine = epoxyqueuosine(34) in tRNA + adenine + L-methionine + 2 H(+). It participates in tRNA modification; tRNA-queuosine biosynthesis. Functionally, transfers and isomerizes the ribose moiety from AdoMet to the 7-aminomethyl group of 7-deazaguanine (preQ1-tRNA) to give epoxyqueuosine (oQ-tRNA). The polypeptide is S-adenosylmethionine:tRNA ribosyltransferase-isomerase (Prochlorococcus marinus (strain MIT 9313)).